We begin with the raw amino-acid sequence, 741 residues long: MGPPGPALPATMNNSSSETRGHPHSASSPSERVFPMPLPRKAPLNIPGTPVLEDFPQNDDEKERLQRRRSRVFDLQFSTDSPRLLASPSSRSIDISATIPKFTNTQITEHYSTCIKLSTENKITTKNAFGLHLIDFMSEILKQKDTEPTNFKVAAGTLDASTKIYAVRVDAVHADVYRVLGGLGKDAPSLEEVEGHVADGSATEMGTTKKAVKPKKKHLHRTIEQNINNLNVSEADRKCEIDPMFQKTAASFDECSTAGVFLSTLHCQDYRSELLFPSDVQTLSTGEPLELPELGCVEMTDLKAPLQQCAEDRQICPSLAGFQFTQWDSETHNESVSALVDKFKKNDQVFDINAEVDESDCGDFPDGSLGDDFDANDEPDHTAVGDHEEFRSWKEPCQVQSCQEEMISLGDGDIRTMCPLLSMKPGEYSYFSPRTMSMWAGPDHWRFRPRRKQDAPSQSENKKKSTKKDFEIDFEDDIDFDVYFRKTKAATILTKSTLENQNWRATTLPTDFNYNVDTLVQLHLKPGTRLLKMAQGHRVETEHYEEIEDYDYNNPNDTSNFCPGLQAADSDDEDLDDLFVGPVGNSDLSPYPCHPPKTAQQNGDTPEAQGLDITTYGESNLVAEPQKVNKIEIHYAKTAKKMDMKKLKQSMWSLLTALSGKEADAEANHREAGKEAALAEVADEKMLSGLTKDLQRSLPPVMAQNLSIPLAFACLLHLANEKNLKLEGTEDLSDVLVRQGD.

The interval 1-67 is disordered; sequence MGPPGPALPA…NDDEKERLQR (67 aa). Phosphoserine is present on residues Ser15, Ser25, and Ser28. Thr49 carries the phosphothreonine modification. 9 positions are modified to phosphoserine: Ser70, Ser78, Ser81, Ser87, Ser89, Ser92, Ser96, Ser201, and Ser233. Positions 361–377 are enriched in acidic residues; that stretch reads CGDFPDGSLGDDFDAND. The interval 361-383 is disordered; it reads CGDFPDGSLGDDFDANDEPDHTA. Ser432 is modified (phosphoserine). The interval 447–467 is disordered; that stretch reads FRPRRKQDAPSQSENKKKSTK. Lys488 participates in a covalent cross-link: Glycyl lysine isopeptide (Lys-Gly) (interchain with G-Cter in SUMO2). Residue Ser496 is modified to Phosphoserine. A phosphothreonine mark is found at Thr598 and Thr605. Lys637 bears the N6-acetyllysine mark.

The protein belongs to the CND2 (condensin subunit 2) family. In terms of assembly, component of the condensin complex, which contains the SMC2 and SMC4 heterodimer, and three non SMC subunits that probably regulate the complex: NCAPH/BRRN1, NCAPD2/CAPD2 and NCAPG. Post-translationally, phosphorylated by CDK1. Its phosphorylation, as well as that of NCAPD2 and NCAPG subunits, activates the condensin complex and is required for chromosome condensation. Widely expressed at low level. Expressed in proliferating cells.

The protein localises to the nucleus. The protein resides in the cytoplasm. It is found in the chromosome. Regulatory subunit of the condensin complex, a complex required for conversion of interphase chromatin into mitotic-like condense chromosomes. The condensin complex probably introduces positive supercoils into relaxed DNA in the presence of type I topoisomerases and converts nicked DNA into positive knotted forms in the presence of type II topoisomerases. Early in neurogenesis, may play an essential role to ensure accurate mitotic chromosome condensation in neuron stem cells, ultimately affecting neuron pool and cortex size. The polypeptide is Condensin complex subunit 2 (Homo sapiens (Human)).